The primary structure comprises 336 residues: uncharacterized protein (336 aa).

Disordered regions lie at residues 29–93 and 116–147; these read GGVS…HSGA and LQERPAASQPWRTASAQKQHGSSQPHQGGVTG. Composition is skewed to polar residues over residues 70 to 82 and 125 to 141; these read SGGSCEGLSTSTA and PWRTASAQKQHGSSQPH.

This is an uncharacterized protein from Bos taurus (Bovine).